A 180-amino-acid chain; its full sequence is Crossover junction endodeoxyribonuclease RuvC (180 aa).

Active-site residues include Asp-7, Glu-66, and Asp-138. Asp-7, Glu-66, and Asp-138 together coordinate Mg(2+).

The protein belongs to the RuvC family. In terms of assembly, homodimer which binds Holliday junction (HJ) DNA. The HJ becomes 2-fold symmetrical on binding to RuvC with unstacked arms; it has a different conformation from HJ DNA in complex with RuvA. In the full resolvosome a probable DNA-RuvA(4)-RuvB(12)-RuvC(2) complex forms which resolves the HJ. It depends on Mg(2+) as a cofactor.

Its subcellular location is the cytoplasm. The enzyme catalyses Endonucleolytic cleavage at a junction such as a reciprocal single-stranded crossover between two homologous DNA duplexes (Holliday junction).. The RuvA-RuvB-RuvC complex processes Holliday junction (HJ) DNA during genetic recombination and DNA repair. Endonuclease that resolves HJ intermediates. Cleaves cruciform DNA by making single-stranded nicks across the HJ at symmetrical positions within the homologous arms, yielding a 5'-phosphate and a 3'-hydroxyl group; requires a central core of homology in the junction. The consensus cleavage sequence is 5'-(A/T)TT(C/G)-3'. Cleavage occurs on the 3'-side of the TT dinucleotide at the point of strand exchange. HJ branch migration catalyzed by RuvA-RuvB allows RuvC to scan DNA until it finds its consensus sequence, where it cleaves and resolves the cruciform DNA. This Burkholderia multivorans (strain ATCC 17616 / 249) protein is Crossover junction endodeoxyribonuclease RuvC.